The primary structure comprises 255 residues: 1-(5-phosphoribosyl)-5-[(5-phosphoribosylamino)methylideneamino] imidazole-4-carboxamide isomerase (255 aa).

Residue aspartate 12 is the Proton acceptor of the active site. The active-site Proton donor is aspartate 131.

It belongs to the HisA/HisF family.

It localises to the cytoplasm. The catalysed reaction is 1-(5-phospho-beta-D-ribosyl)-5-[(5-phospho-beta-D-ribosylamino)methylideneamino]imidazole-4-carboxamide = 5-[(5-phospho-1-deoxy-D-ribulos-1-ylimino)methylamino]-1-(5-phospho-beta-D-ribosyl)imidazole-4-carboxamide. Its pathway is amino-acid biosynthesis; L-histidine biosynthesis; L-histidine from 5-phospho-alpha-D-ribose 1-diphosphate: step 4/9. This is 1-(5-phosphoribosyl)-5-[(5-phosphoribosylamino)methylideneamino] imidazole-4-carboxamide isomerase from Cutibacterium acnes (strain DSM 16379 / KPA171202) (Propionibacterium acnes).